Consider the following 309-residue polypeptide: Branched-chain-amino-acid aminotransferase (309 aa).

N6-(pyridoxal phosphate)lysine is present on Lys160.

This sequence belongs to the class-IV pyridoxal-phosphate-dependent aminotransferase family. As to quaternary structure, homohexamer. The cofactor is pyridoxal 5'-phosphate.

The catalysed reaction is L-leucine + 2-oxoglutarate = 4-methyl-2-oxopentanoate + L-glutamate. The enzyme catalyses L-isoleucine + 2-oxoglutarate = (S)-3-methyl-2-oxopentanoate + L-glutamate. It catalyses the reaction L-valine + 2-oxoglutarate = 3-methyl-2-oxobutanoate + L-glutamate. Its pathway is amino-acid biosynthesis; L-isoleucine biosynthesis; L-isoleucine from 2-oxobutanoate: step 4/4. It functions in the pathway amino-acid biosynthesis; L-leucine biosynthesis; L-leucine from 3-methyl-2-oxobutanoate: step 4/4. The protein operates within amino-acid biosynthesis; L-valine biosynthesis; L-valine from pyruvate: step 4/4. Its function is as follows. Acts on leucine, isoleucine and valine. The chain is Branched-chain-amino-acid aminotransferase (ilvE) from Escherichia coli O157:H7.